The primary structure comprises 510 residues: DNA nucleotidylexotransferase (510 aa).

Positions 11-17 match the Nuclear localization signal motif; sequence PRRKQPK. The BRCT domain maps to 27–124; it reads KYDIKFKDIA…QPVEIERKHR (98 aa). Residues 254 to 258 form an involved in DNA binding region; that stretch reads VGLRT. Residues 329–334 and 338–341 each bind a 2'-deoxyribonucleoside 5'-triphosphate; these read GFRRGN and HDVD. Mg(2+) is bound by residues aspartate 339, aspartate 341, and aspartate 434. Residue 449–450 participates in a 2'-deoxyribonucleoside 5'-triphosphate binding; it reads GW.

Belongs to the DNA polymerase type-X family. It depends on Mg(2+) as a cofactor.

It is found in the nucleus. It catalyses the reaction DNA(n) + a 2'-deoxyribonucleoside 5'-triphosphate = DNA(n+1) + diphosphate. Template-independent DNA polymerase which catalyzes the random addition of deoxynucleoside 5'-triphosphate to the 3'-end of a DNA initiator. One of the in vivo functions of this enzyme is the addition of nucleotides at the junction (N region) of rearranged Ig heavy chain and T-cell receptor gene segments during the maturation of B- and T-cells. The chain is DNA nucleotidylexotransferase (DNTT) from Ambystoma mexicanum (Axolotl).